The primary structure comprises 60 residues: Large ribosomal subunit protein uL30 (60 aa).

It belongs to the universal ribosomal protein uL30 family. As to quaternary structure, part of the 50S ribosomal subunit.

In Amoebophilus asiaticus (strain 5a2), this protein is Large ribosomal subunit protein uL30.